The following is an 85-amino-acid chain: Elicitor peptide 7 (85 aa).

A propeptide spanning residues 1–62 (MEGEGRREDG…TEVVNIPRSV (62 aa)) is cleaved from the precursor. The segment at 66–85 (NVAARKGKQQTSSGKGGGTN) is disordered.

It belongs to the brassicaceae elicitor peptide family.

Elicitor of plant defense. This is Elicitor peptide 7 (PEP7) from Arabidopsis thaliana (Mouse-ear cress).